The sequence spans 67 residues: Large ribosomal subunit protein uL29 (67 aa).

This sequence belongs to the universal ribosomal protein uL29 family.

The sequence is that of Large ribosomal subunit protein uL29 from Methanosarcina mazei (strain ATCC BAA-159 / DSM 3647 / Goe1 / Go1 / JCM 11833 / OCM 88) (Methanosarcina frisia).